The following is a 200-amino-acid chain: Thymidine kinase (200 aa).

ATP is bound by residues 9–16 (STMNAGKS) and 88–91 (DEAH). Glutamate 89 functions as the Proton acceptor in the catalytic mechanism. The Zn(2+) site is built by cysteine 146, cysteine 148, cysteine 183, and histidine 186.

The protein belongs to the thymidine kinase family. In terms of assembly, homotetramer.

The protein localises to the cytoplasm. The catalysed reaction is thymidine + ATP = dTMP + ADP + H(+). The sequence is that of Thymidine kinase from Rhizobium etli (strain ATCC 51251 / DSM 11541 / JCM 21823 / NBRC 15573 / CFN 42).